Reading from the N-terminus, the 213-residue chain is Ribonuclease HII (213 aa).

One can recognise an RNase H type-2 domain in the interval glycine 18–asparagine 213. The a divalent metal cation site is built by aspartate 24, glutamate 25, and aspartate 116.

It belongs to the RNase HII family. Mn(2+) is required as a cofactor. Mg(2+) serves as cofactor.

Its subcellular location is the cytoplasm. It carries out the reaction Endonucleolytic cleavage to 5'-phosphomonoester.. Endonuclease that specifically degrades the RNA of RNA-DNA hybrids. The chain is Ribonuclease HII from Shewanella sediminis (strain HAW-EB3).